Here is a 382-residue protein sequence, read N- to C-terminus: MKLHEYEAKELFSKYGVKIPPGKVALTPEEVLKIAREIGAPVVLKAQVVVAGRGKAGGIKVANSPEEAYELSKRMFGMNIKGLIVKKLYVTKFVEVEREMYLSLIIDRASRRYLFLASPVGGMDIEEIAKTSPEKIKRVYVDPATGLRDYHVRSIVSWLGFKQGTSQWQQAASIVQAMYRIMVDYDAELVESNPLAVTKEGEVIPLDARVIVDDNALFKHPELEKALEEDPRDVTEFEAYAKKIGFHYVELDGDVGIIGNGAGLTMATMDLVYHFGGRPANFLDIGGGASREVVKEAVKVLLHHPRVKVIFVNIFGGITRADEVALGIKEALAESGGTNKKIVVRMKGTNEELGRAILAEIGVPLFDSAEEAAKKAVELARV.

Residues 9 to 240 (KELFSKYGVK…PRDVTEFEAY (232 aa)) enclose the ATP-grasp domain. Residues K45, 52–54 (GRG), V94, and E99 each bind ATP. The Mg(2+) site is built by N193 and D207. Substrate-binding positions include N260 and 317–319 (GIT).

This sequence belongs to the succinate/malate CoA ligase beta subunit family. Heterotetramer of two alpha and two beta subunits. Mg(2+) serves as cofactor.

It catalyses the reaction succinate + ATP + CoA = succinyl-CoA + ADP + phosphate. The catalysed reaction is GTP + succinate + CoA = succinyl-CoA + GDP + phosphate. The protein operates within carbohydrate metabolism; tricarboxylic acid cycle; succinate from succinyl-CoA (ligase route): step 1/1. Functionally, succinyl-CoA synthetase functions in the citric acid cycle (TCA), coupling the hydrolysis of succinyl-CoA to the synthesis of either ATP or GTP and thus represents the only step of substrate-level phosphorylation in the TCA. The beta subunit provides nucleotide specificity of the enzyme and binds the substrate succinate, while the binding sites for coenzyme A and phosphate are found in the alpha subunit. The protein is Succinate--CoA ligase [ADP-forming] subunit beta of Pyrobaculum aerophilum (strain ATCC 51768 / DSM 7523 / JCM 9630 / CIP 104966 / NBRC 100827 / IM2).